Reading from the N-terminus, the 720-residue chain is DNA replication licensing factor mcm7-A (720 aa).

A C4-type zinc finger spans residues 183 to 210; the sequence is CDQCGAETYQPIQSPTFMPLIMCPSREC. One can recognise an MCM domain in the interval 331-537; it reads FYEKLAASIA…NDLRLAQHIT (207 aa). Residues Y344, G383, A385, K386, S387, N488, R513, and R603 each contribute to the ATP site. The Arginine finger motif lies at 512-515; it reads SRFD.

The protein belongs to the MCM family. In terms of assembly, component of the mcm2-7 complex (RLF-M). The complex forms a toroidal hexameric ring with the proposed subunit order mcm2-mcm6-mcm4-mcm7-mcm3-mcm5. The heterodimer of mmcm3/mcm5 interacts with mcm4, mmcm6, mcm7 and weakly with mcm2. The N-terminus is required for interaction with mmcm3, though this interaction may not be direct, and remains in a complex with mmcm3 throughout the cell cycle. Begins to associate with zmcm6 at the neurula stage. Component of the replisome complex. Component of the CMG helicase complex, composed of the mcm2-7 complex, the GINS complex and cdc45. Post-translationally, ubiquitinated by traip when forks converge following formation of DNA interstrand cross-links. Ubiquitinated via 'Lys-6'- and 'Lys-63'-linked polyubiquitination by traip. Short ubiquitin chains on mcm7 promote recruitment of DNA glycosylase neil3. If the interstrand cross-link cannot be cleaved by neil3, the ubiquitin chains continue to grow on mcm7, promoting the unloading of the CMG helicase complex by the vcp/p97 ATPase.

Its subcellular location is the nucleus. The protein resides in the chromosome. It catalyses the reaction ATP + H2O = ADP + phosphate + H(+). Acts as a component of the mcm2-7 complex (mcm complex) which is the putative replicative helicase essential for 'once per cell cycle' DNA replication initiation and elongation in eukaryotic cells. The active ATPase sites in the mcm2-7 ring are formed through the interaction surfaces of two neighboring subunits such that a critical structure of a conserved arginine finger motif is provided in trans relative to the ATP-binding site of the Walker A box of the adjacent subunit. The six ATPase active sites, however, are likely to contribute differentially to the complex helicase activity. The existence of maternal and zygotic forms of mcm3 and mcm6 suggests that specific forms of mcm2-7 complexes may be used during different stages of development. This Xenopus laevis (African clawed frog) protein is DNA replication licensing factor mcm7-A (mcm7-a).